The primary structure comprises 213 residues: MSERSVSKRTEQKRWYTVQAPEQFDREVLGKTPAEEPDKVLGRTIETTLGELTNDASENNTKLTFKINEVASDSAYTEFIRHELTRDYLRSLVRRGSSKVEAYITVLTTDDYRVQIQPVAVTTKKADASQEKAIRRTMIDLVRETAEDHTFEQLIDSVVEGRLSSAIYGEAKDIYPLRRVEIKKTTLEARPEEVAAEEETAVDVDEEDVDVEA.

The interval alanine 189–alanine 213 is disordered. Over residues valine 194–alanine 213 the composition is skewed to acidic residues.

Belongs to the eukaryotic ribosomal protein eS1 family.

This is Small ribosomal subunit protein eS1 from Haloarcula marismortui (strain ATCC 43049 / DSM 3752 / JCM 8966 / VKM B-1809) (Halobacterium marismortui).